A 186-amino-acid chain; its full sequence is Putative transcriptional regulator encoded by LINC00473 (186 aa).

The segment at 1-62 (MELSAAAGRR…RDCTPTCTNA (62 aa)) is disordered. A compositionally biased stretch (basic and acidic residues) spans 18 to 40 (FTGRHRTERSQERGSTPRKERSM).

Its function is as follows. May play a role in cAMP-mediated gene transcription. The chain is Putative transcriptional regulator encoded by LINC00473 (LINC00473) from Homo sapiens (Human).